A 440-amino-acid chain; its full sequence is Chaperone SurA (440 aa).

An N-terminal signal peptide occupies residues 1–25 (MGTKLSSRSPFSLPFLTLLAGMAIA). 2 consecutive PpiC domains span residues 182–283 (SDEY…KLVE) and 294–392 (IDQT…QVIE).

It is found in the periplasm. It catalyses the reaction [protein]-peptidylproline (omega=180) = [protein]-peptidylproline (omega=0). Chaperone involved in the correct folding and assembly of outer membrane proteins. Recognizes specific patterns of aromatic residues and the orientation of their side chains, which are found more frequently in integral outer membrane proteins. May act in both early periplasmic and late outer membrane-associated steps of protein maturation. This chain is Chaperone SurA, found in Nitrosospira multiformis (strain ATCC 25196 / NCIMB 11849 / C 71).